A 1934-amino-acid polypeptide reads, in one-letter code: Pyruvate dehydrogenase [NADP(+)] (1934 aa).

2 consecutive 4Fe-4S ferredoxin-type domains span residues 710 to 739 (SIPIVDMNKCTQCNYCSIVCPHAAIRPFLL) and 767 to 796 (YRIQVTPLDCTGCELCVHACPDDALHMEGL). Residues cysteine 719, cysteine 722, cysteine 725, cysteine 729, cysteine 776, cysteine 779, cysteine 782, and cysteine 786 each coordinate [4Fe-4S] cluster. Residues 1288 to 1438 (MHVLYGTETG…ELIEWLPDYL (151 aa)) form the Flavodoxin-like domain. The FAD-binding FR-type domain occupies 1501–1759 (PNSVLLPVIE…NIKASAFNLP (259 aa)). Residues 1542–1553 (YCLGDSLALYGQ) and 1685–1695 (IKSRSYSIASC) contribute to the FAD site.

In the N-terminal section; belongs to the pyruvate:ferredoxin/flavodoxin oxidoreductase family. As to quaternary structure, homodimer. FAD serves as cofactor. The cofactor is FMN. Thiamine diphosphate is required as a cofactor.

It catalyses the reaction pyruvate + NADP(+) + CoA = acetyl-CoA + CO2 + NADPH. Its function is as follows. May have an important role in respiratory metabolism. Cryptosporidium have a relic mitochondrion with no function in energy metabolism so it is not known if PFOR has a function. This is Pyruvate dehydrogenase [NADP(+)] (PFOR) from Cryptosporidium parvum.